The primary structure comprises 680 residues: Glutamine-dependent NAD(+) synthetase (680 aa).

The region spanning 12–276 is the CN hydrolase domain; that stretch reads VRVAACTHHA…EHRSVADVDT (265 aa). The active-site Proton acceptor; for glutaminase activity is E52. K121 functions as the For glutaminase activity in the catalytic mechanism. Y127 provides a ligand contact to L-glutamine. C176 serves as the catalytic Nucleophile; for glutaminase activity. Positions 203 and 209 each coordinate L-glutamine. 366–373 provides a ligand contact to ATP; sequence GVSGGLDS. N456 lines the deamido-NAD(+) pocket. An ATP-binding site is contributed by T480. Deamido-NAD(+) is bound by residues E485, 490-493, and K636; that span reads WSTY.

The protein in the C-terminal section; belongs to the NAD synthetase family.

The catalysed reaction is deamido-NAD(+) + L-glutamine + ATP + H2O = L-glutamate + AMP + diphosphate + NAD(+) + H(+). Its pathway is cofactor biosynthesis; NAD(+) biosynthesis; NAD(+) from deamido-NAD(+) (L-Gln route): step 1/1. Catalyzes the ATP-dependent amidation of deamido-NAD to form NAD. Uses L-glutamine as a nitrogen source. This chain is Glutamine-dependent NAD(+) synthetase, found in Mycobacterium leprae (strain TN).